The primary structure comprises 225 residues: Ribose-5-phosphate isomerase A (225 aa).

The tract at residues 1–20 (MKQSGGTEAQKRRAGKQAAD) is disordered. Substrate-binding positions include 32 to 35 (TGST), 86 to 89 (DGAD), and 98 to 101 (KGGG). Catalysis depends on glutamate 107, which acts as the Proton acceptor. Lysine 125 is a substrate binding site.

It belongs to the ribose 5-phosphate isomerase family. As to quaternary structure, homodimer.

It carries out the reaction aldehydo-D-ribose 5-phosphate = D-ribulose 5-phosphate. It functions in the pathway carbohydrate degradation; pentose phosphate pathway; D-ribose 5-phosphate from D-ribulose 5-phosphate (non-oxidative stage): step 1/1. Catalyzes the reversible conversion of ribose-5-phosphate to ribulose 5-phosphate. The sequence is that of Ribose-5-phosphate isomerase A from Natronomonas pharaonis (strain ATCC 35678 / DSM 2160 / CIP 103997 / JCM 8858 / NBRC 14720 / NCIMB 2260 / Gabara) (Halobacterium pharaonis).